A 260-amino-acid chain; its full sequence is Phosphate import ATP-binding protein PstB (260 aa).

The ABC transporter domain maps to 14 to 255 (IETENLNLFY…PKNTKTEEYI (242 aa)). Residue 46–53 (GPSGCGKS) participates in ATP binding.

The protein belongs to the ABC transporter superfamily. Phosphate importer (TC 3.A.1.7) family. As to quaternary structure, the complex is composed of two ATP-binding proteins (PstB), two transmembrane proteins (PstC and PstA) and a solute-binding protein (PstS).

The protein localises to the cell inner membrane. It catalyses the reaction phosphate(out) + ATP + H2O = ADP + 2 phosphate(in) + H(+). Functionally, part of the ABC transporter complex PstSACB involved in phosphate import. Responsible for energy coupling to the transport system. This Borreliella burgdorferi (strain ATCC 35210 / DSM 4680 / CIP 102532 / B31) (Borrelia burgdorferi) protein is Phosphate import ATP-binding protein PstB.